The chain runs to 156 residues: ATP synthase subunit b (156 aa).

Residues 11 to 31 (AIAFVLFVLFCMKYVWPPLMA) traverse the membrane as a helical segment.

The protein belongs to the ATPase B chain family. F-type ATPases have 2 components, F(1) - the catalytic core - and F(0) - the membrane proton channel. F(1) has five subunits: alpha(3), beta(3), gamma(1), delta(1), epsilon(1). F(0) has three main subunits: a(1), b(2) and c(10-14). The alpha and beta chains form an alternating ring which encloses part of the gamma chain. F(1) is attached to F(0) by a central stalk formed by the gamma and epsilon chains, while a peripheral stalk is formed by the delta and b chains.

It localises to the cell inner membrane. Its function is as follows. F(1)F(0) ATP synthase produces ATP from ADP in the presence of a proton or sodium gradient. F-type ATPases consist of two structural domains, F(1) containing the extramembraneous catalytic core and F(0) containing the membrane proton channel, linked together by a central stalk and a peripheral stalk. During catalysis, ATP synthesis in the catalytic domain of F(1) is coupled via a rotary mechanism of the central stalk subunits to proton translocation. In terms of biological role, component of the F(0) channel, it forms part of the peripheral stalk, linking F(1) to F(0). The polypeptide is ATP synthase subunit b (Sodalis glossinidius (strain morsitans)).